The primary structure comprises 447 residues: UPF0210 protein LSL_0162 (447 aa).

It belongs to the UPF0210 family. As to quaternary structure, homodimer.

The sequence is that of UPF0210 protein LSL_0162 from Ligilactobacillus salivarius (strain UCC118) (Lactobacillus salivarius).